The primary structure comprises 807 residues: Leucine--tRNA ligase (807 aa).

Positions 40-51 match the 'HIGH' region motif; it reads PYPSGSGLHVGH. Residues 576-580 carry the 'KMSKS' region motif; sequence KMSKS. Residue Lys579 participates in ATP binding.

It belongs to the class-I aminoacyl-tRNA synthetase family.

It is found in the cytoplasm. The catalysed reaction is tRNA(Leu) + L-leucine + ATP = L-leucyl-tRNA(Leu) + AMP + diphosphate. This Chlorobaculum parvum (strain DSM 263 / NCIMB 8327) (Chlorobium vibrioforme subsp. thiosulfatophilum) protein is Leucine--tRNA ligase.